The chain runs to 127 residues: Large ribosomal subunit protein bL17 (127 aa).

Belongs to the bacterial ribosomal protein bL17 family. Part of the 50S ribosomal subunit. Contacts protein L32.

This chain is Large ribosomal subunit protein bL17, found in Pediococcus pentosaceus (strain ATCC 25745 / CCUG 21536 / LMG 10740 / 183-1w).